We begin with the raw amino-acid sequence, 407 residues long: Arginine deiminase (407 aa).

The active-site Amidino-cysteine intermediate is C397.

Belongs to the arginine deiminase family.

It localises to the cytoplasm. It catalyses the reaction L-arginine + H2O = L-citrulline + NH4(+). The protein operates within amino-acid degradation; L-arginine degradation via ADI pathway; carbamoyl phosphate from L-arginine: step 1/2. This chain is Arginine deiminase, found in Escherichia coli O81 (strain ED1a).